Here is a 104-residue protein sequence, read N- to C-terminus: Large ribosomal subunit protein uL24 (104 aa).

Belongs to the universal ribosomal protein uL24 family. In terms of assembly, part of the 50S ribosomal subunit.

In terms of biological role, one of two assembly initiator proteins, it binds directly to the 5'-end of the 23S rRNA, where it nucleates assembly of the 50S subunit. Its function is as follows. One of the proteins that surrounds the polypeptide exit tunnel on the outside of the subunit. This Dichelobacter nodosus (strain VCS1703A) protein is Large ribosomal subunit protein uL24.